The primary structure comprises 275 residues: Urease accessory protein UreD (275 aa).

Belongs to the UreD family. UreD, UreF and UreG form a complex that acts as a GTP-hydrolysis-dependent molecular chaperone, activating the urease apoprotein by helping to assemble the nickel containing metallocenter of UreC. The UreE protein probably delivers the nickel.

The protein resides in the cytoplasm. Functionally, required for maturation of urease via the functional incorporation of the urease nickel metallocenter. The sequence is that of Urease accessory protein UreD from Cereibacter sphaeroides (strain ATCC 17023 / DSM 158 / JCM 6121 / CCUG 31486 / LMG 2827 / NBRC 12203 / NCIMB 8253 / ATH 2.4.1.) (Rhodobacter sphaeroides).